Reading from the N-terminus, the 228-residue chain is UPF0758 protein CLD_1541 (228 aa).

An MPN domain is found at 106-228 (KINTPLDVSN…YVSMKEKGTI (123 aa)). Zn(2+) is bound by residues His-177, His-179, and Asp-190. The JAMM motif motif lies at 177-190 (HNHPSGDPTPSKED).

This sequence belongs to the UPF0758 family.

The chain is UPF0758 protein CLD_1541 from Clostridium botulinum (strain Okra / Type B1).